A 247-amino-acid polypeptide reads, in one-letter code: 2,3-bisphosphoglycerate-dependent phosphoglycerate mutase (247 aa).

Substrate is bound by residues 8 to 15 (RHGESVWN), 21 to 22 (TG), Arg60, 87 to 90 (ERHY), Lys98, 114 to 115 (RR), and 183 to 184 (GN). His9 acts as the Tele-phosphohistidine intermediate in catalysis. Glu87 (proton donor/acceptor) is an active-site residue.

Belongs to the phosphoglycerate mutase family. BPG-dependent PGAM subfamily. In terms of assembly, homodimer.

It carries out the reaction (2R)-2-phosphoglycerate = (2R)-3-phosphoglycerate. It participates in carbohydrate degradation; glycolysis; pyruvate from D-glyceraldehyde 3-phosphate: step 3/5. In terms of biological role, catalyzes the interconversion of 2-phosphoglycerate and 3-phosphoglycerate. The sequence is that of 2,3-bisphosphoglycerate-dependent phosphoglycerate mutase from Geobacter sulfurreducens (strain ATCC 51573 / DSM 12127 / PCA).